A 205-amino-acid chain; its full sequence is ATP synthase subunit b (205 aa).

A helical membrane pass occupies residues 45 to 65 (LGMTATAWVSLAMVIVILLLL).

The protein belongs to the ATPase B chain family. F-type ATPases have 2 components, F(1) - the catalytic core - and F(0) - the membrane proton channel. F(1) has five subunits: alpha(3), beta(3), gamma(1), delta(1), epsilon(1). F(0) has three main subunits: a(1), b(2) and c(10-14). The alpha and beta chains form an alternating ring which encloses part of the gamma chain. F(1) is attached to F(0) by a central stalk formed by the gamma and epsilon chains, while a peripheral stalk is formed by the delta and b chains.

The protein localises to the cell inner membrane. In terms of biological role, f(1)F(0) ATP synthase produces ATP from ADP in the presence of a proton or sodium gradient. F-type ATPases consist of two structural domains, F(1) containing the extramembraneous catalytic core and F(0) containing the membrane proton channel, linked together by a central stalk and a peripheral stalk. During catalysis, ATP synthesis in the catalytic domain of F(1) is coupled via a rotary mechanism of the central stalk subunits to proton translocation. Component of the F(0) channel, it forms part of the peripheral stalk, linking F(1) to F(0). This chain is ATP synthase subunit b, found in Rhizorhabdus wittichii (strain DSM 6014 / CCUG 31198 / JCM 15750 / NBRC 105917 / EY 4224 / RW1) (Sphingomonas wittichii).